A 630-amino-acid chain; its full sequence is Succinate dehydrogenase [ubiquinone] flavoprotein subunit, mitochondrial (630 aa).

The transit peptide at 1 to 31 (MWRGCVSRGLRSLSKGKGSSSSAPVSAAARL) directs the protein to the mitochondrion. FAD is bound by residues 52–57 (GAGGAG), 75–90 (TKLF…AQGG), and Asp-260. A Tele-8alpha-FAD histidine modification is found at His-83. Substrate-binding residues include His-281 and Thr-293. The active-site Proton acceptor is the Arg-325. Residue His-392 participates in substrate binding. FAD is bound at residue Glu-426. Arg-437 lines the substrate pocket. Residue 442–443 (SL) participates in FAD binding.

Belongs to the FAD-dependent oxidoreductase 2 family. FRD/SDH subfamily. As to quaternary structure, component of complex II composed of eight subunits in plants: four classical SDH subunits SDH1, SDH2, SDH3 and SDH4 (a flavoprotein (FP), an iron-sulfur protein (IP), and a cytochrome b composed of a large and a small subunit.), as well as four subunits unknown in mitochondria from bacteria and heterotrophic eukaryotes. Requires FAD as cofactor.

It localises to the mitochondrion inner membrane. It catalyses the reaction a quinone + succinate = fumarate + a quinol. Its pathway is carbohydrate metabolism; tricarboxylic acid cycle; fumarate from succinate (eukaryal route): step 1/1. Functionally, flavoprotein (FP) subunit of succinate dehydrogenase (SDH) that is involved in complex II of the mitochondrial electron transport chain and is responsible for transferring electrons from succinate to ubiquinone (coenzyme Q). In Oryza sativa subsp. japonica (Rice), this protein is Succinate dehydrogenase [ubiquinone] flavoprotein subunit, mitochondrial (SDH1).